Here is an 891-residue protein sequence, read N- to C-terminus: DNA mismatch repair protein MutS (891 aa).

An ATP-binding site is contributed by 643 to 650; sequence GPNMGGKS.

This sequence belongs to the DNA mismatch repair MutS family.

Its function is as follows. This protein is involved in the repair of mismatches in DNA. It is possible that it carries out the mismatch recognition step. This protein has a weak ATPase activity. The protein is DNA mismatch repair protein MutS of Xanthomonas campestris pv. campestris (strain ATCC 33913 / DSM 3586 / NCPPB 528 / LMG 568 / P 25).